Reading from the N-terminus, the 325-residue chain is Natural cytotoxicity triggering receptor 1 (325 aa).

A signal peptide spans 1–16 (MLPTLTALLCLGLCLS). The Extracellular portion of the chain corresponds to 17–255 (QRINTEKETL…SAFWDHTTQN (239 aa)). Ig-like domains are found at residues 34 to 118 (KPSI…LVVT) and 129 to 211 (YPRP…LLIT). Cys-49 and Cys-98 are disulfide-bonded. Asn-139 is a glycosylation site (N-linked (GlcNAc...) asparagine). A disulfide bond links Cys-144 and Cys-190. Residues Asn-216 and Asn-238 are each glycosylated (N-linked (GlcNAc...) asparagine). The chain crosses the membrane as a helical span at residues 256–273 (LIRIGLACIILITLVWLL). Residues 274–325 (TEDWLSKRKDHEEANRLTNWECRRRWRMQHYFEEEQRNAISMMELKATPGAL) are Cytoplasmic-facing.

It belongs to the natural cytotoxicity receptor (NCR) family. Interacts with CD3Z and FCER1G. Selectively expressed by NK cells.

Its subcellular location is the cell membrane. In terms of biological role, cytotoxicity-activating receptor that may contribute to the increased efficiency of activated natural killer (NK) cells to mediate tumor cell lysis. The protein is Natural cytotoxicity triggering receptor 1 (Ncr1) of Mus musculus (Mouse).